The primary structure comprises 248 residues: Triosephosphate isomerase (248 aa).

Position 11–13 (11–13 (NWK)) interacts with substrate. H95 serves as the catalytic Electrophile. E167 acts as the Proton acceptor in catalysis. Residues G173, S212, and 233-234 (GG) contribute to the substrate site.

This sequence belongs to the triosephosphate isomerase family. Homodimer.

It is found in the cytoplasm. The catalysed reaction is D-glyceraldehyde 3-phosphate = dihydroxyacetone phosphate. It participates in carbohydrate biosynthesis; gluconeogenesis. The protein operates within carbohydrate degradation; glycolysis; D-glyceraldehyde 3-phosphate from glycerone phosphate: step 1/1. Functionally, involved in the gluconeogenesis. Catalyzes stereospecifically the conversion of dihydroxyacetone phosphate (DHAP) to D-glyceraldehyde-3-phosphate (G3P). This Ralstonia nicotianae (strain ATCC BAA-1114 / GMI1000) (Ralstonia solanacearum) protein is Triosephosphate isomerase.